The chain runs to 561 residues: NAD(P)H-quinone oxidoreductase chain 4 2 (561 aa).

A run of 14 helical transmembrane segments spans residues 6–26, 36–56, 87–107, 115–135, 136–156, 169–189, 210–230, 244–264, 275–295, 312–332, 333–353, 376–396, 419–439, and 490–510; these read FPWLTTIVLLPLLAALLIPFI, WYGLGVGAIDFALMCYVFWKY, LSMPLVLLAGLVTTLSIFAAW, LFYFLMLVLYSAQIGVFVAQD, LMLLFIMWELELVPVYLLISI, FLLYTAAASIFILVAALGMAL, AFELLLYLGLLITFGVKLAVF, SAPVSMILAGVLLKMGGYGLI, HVYFAPVLAILGVVNIVYGGL, VAHMGFVLLGIASFTDLGISG, ALLQMISHGLIAAVLFFLAGV, IFALFTISAMASLALPGMSGF, VTVFLAAVGLILTPIYLLSML, and VAIAACFLVLIIGIGLYPKIA.

This sequence belongs to the complex I subunit 4 family.

It is found in the cellular thylakoid membrane. The catalysed reaction is a plastoquinone + NADH + (n+1) H(+)(in) = a plastoquinol + NAD(+) + n H(+)(out). It catalyses the reaction a plastoquinone + NADPH + (n+1) H(+)(in) = a plastoquinol + NADP(+) + n H(+)(out). Functionally, NDH-1 shuttles electrons from NAD(P)H, via FMN and iron-sulfur (Fe-S) centers, to quinones in the respiratory chain. The immediate electron acceptor for the enzyme in this species is believed to be plastoquinone. Couples the redox reaction to proton translocation (for every two electrons transferred, four hydrogen ions are translocated across the cytoplasmic membrane), and thus conserves the redox energy in a proton gradient. The polypeptide is NAD(P)H-quinone oxidoreductase chain 4 2 (Trichodesmium erythraeum (strain IMS101)).